Consider the following 343-residue polypeptide: Glucokinase (343 aa).

18–23 (GDIGGT) serves as a coordination point for ATP.

Belongs to the bacterial glucokinase family.

The protein resides in the cytoplasm. It catalyses the reaction D-glucose + ATP = D-glucose 6-phosphate + ADP + H(+). The polypeptide is Glucokinase (Brucella abortus (strain 2308)).